A 232-amino-acid polypeptide reads, in one-letter code: tRNA (guanine-N(1)-)-methyltransferase (232 aa).

S-adenosyl-L-methionine contacts are provided by residues Gly-111 and 131–136 (IGDYIL).

The protein belongs to the RNA methyltransferase TrmD family. In terms of assembly, homodimer.

Its subcellular location is the cytoplasm. It carries out the reaction guanosine(37) in tRNA + S-adenosyl-L-methionine = N(1)-methylguanosine(37) in tRNA + S-adenosyl-L-homocysteine + H(+). Its function is as follows. Specifically methylates guanosine-37 in various tRNAs. This chain is tRNA (guanine-N(1)-)-methyltransferase, found in Bartonella quintana (strain Toulouse) (Rochalimaea quintana).